Reading from the N-terminus, the 238-residue chain is MGRKWNNIKEKKAQKDKNTSRIYAKFGKEIYVAAKSGEPNPESNQTLRLVLERAKTYSVPNHIIDRAIDKAKGAGDENYDHLRYEGFGPNGSMLIVDALTNNVNRTASDVRAAFGKNGGNMGVSGSVAYMFDHTATFGVEGKSVDEVLETLMEQDIDVRDVIDDNGLTIVYAEPDQFAQVQDALREAGVEEFKVAEFEMLPQTDIELSEEDQAIFEKLIDALEDLEDVQNVFHNVDLK.

This sequence belongs to the TACO1 family. YeeN subfamily.

The protein resides in the cytoplasm. The chain is Probable transcriptional regulatory protein SERP0322 from Staphylococcus epidermidis (strain ATCC 35984 / DSM 28319 / BCRC 17069 / CCUG 31568 / BM 3577 / RP62A).